We begin with the raw amino-acid sequence, 73 residues long: uncharacterized protein (73 aa).

This is an uncharacterized protein from Schizosaccharomyces pombe (strain 972 / ATCC 24843) (Fission yeast).